A 96-amino-acid polypeptide reads, in one-letter code: MHRKMAVKTLSVWLLLVGTLVPQHCCQHWSYGLSPGGKRQLDSLSQTLGNVVEEFPRVDSPCSVLGGAEESPFAGIYRMKGFLGSITDRGNRTQNI.

An N-terminal signal peptide occupies residues 1-26; sequence MHRKMAVKTLSVWLLLVGTLVPQHCC. Position 27 is a pyrrolidone carboxylic acid (Q27). Position 36 is a glycine amide (G36).

Belongs to the GnRH family. In terms of tissue distribution, preoptic area of the brain.

The protein localises to the secreted. Functionally, stimulates the secretion of gonadotropins. The sequence is that of Progonadoliberin-1 (gnrh1) from Verasper moseri (Barfin flounder).